The chain runs to 196 residues: uncharacterized protein (196 aa).

It belongs to the mimivirus R24/R907 family.

This is an uncharacterized protein from Acanthamoeba polyphaga (Amoeba).